The sequence spans 435 residues: Glutamate-1-semialdehyde 2,1-aminomutase (435 aa).

Lys266 is subject to N6-(pyridoxal phosphate)lysine.

Belongs to the class-III pyridoxal-phosphate-dependent aminotransferase family. HemL subfamily. In terms of assembly, homodimer. Requires pyridoxal 5'-phosphate as cofactor.

The protein resides in the cytoplasm. The catalysed reaction is (S)-4-amino-5-oxopentanoate = 5-aminolevulinate. Its pathway is porphyrin-containing compound metabolism; protoporphyrin-IX biosynthesis; 5-aminolevulinate from L-glutamyl-tRNA(Glu): step 2/2. The polypeptide is Glutamate-1-semialdehyde 2,1-aminomutase (Coxiella burnetii (strain Dugway 5J108-111)).